Here is a 250-residue protein sequence, read N- to C-terminus: Ribonuclease HII (250 aa).

In terms of domain architecture, RNase H type-2 spans 66–250; the sequence is QLVAGVDEVG…SFAPVSEYEK (185 aa). Positions 72, 73, and 164 each coordinate a divalent metal cation.

The protein belongs to the RNase HII family. Mn(2+) serves as cofactor. Requires Mg(2+) as cofactor.

The protein localises to the cytoplasm. The catalysed reaction is Endonucleolytic cleavage to 5'-phosphomonoester.. Its function is as follows. Endonuclease that specifically degrades the RNA of RNA-DNA hybrids. In Lactobacillus johnsonii (strain CNCM I-12250 / La1 / NCC 533), this protein is Ribonuclease HII.